The primary structure comprises 101 residues: Citrate lyase acyl carrier protein (101 aa).

Residue Ser14 is modified to O-(phosphoribosyl dephospho-coenzyme A)serine.

The protein belongs to the CitD family. As to quaternary structure, oligomer with a subunit composition of (alpha,beta,gamma)6.

It localises to the cytoplasm. In terms of biological role, covalent carrier of the coenzyme of citrate lyase. The sequence is that of Citrate lyase acyl carrier protein from Clostridium perfringens (strain 13 / Type A).